A 146-amino-acid chain; its full sequence is UPF0178 protein BCE33L2782 (146 aa).

Belongs to the UPF0178 family.

The protein is UPF0178 protein BCE33L2782 of Bacillus cereus (strain ZK / E33L).